A 960-amino-acid polypeptide reads, in one-letter code: FYVE, RhoGEF and PH domain-containing protein 1 (960 aa).

2 disordered regions span residues M1–A210 and A226–P355. S48 bears the Phosphoserine mark. Residues P125–S135 show a composition bias toward basic and acidic residues. 3 stretches are compositionally biased toward pro residues: residues P137–S149, G156–P165, and V173–A190. Positions P171 to P187 match the SH3-binding motif. Phosphoserine is present on S205. The segment covering A231–P251 has biased composition (pro residues). A compositionally biased stretch (basic and acidic residues) spans R273 to G284. Low complexity predominate over residues I285 to S294. The segment covering V335–K350 has biased composition (acidic residues). A DH domain is found at K372–A560. A PH 1 domain is found at E589 to L688. The interval N701 to T725 is disordered. At T710 the chain carries Phosphothreonine. The residue at position 714 (S714) is a Phosphoserine. The FYVE-type zinc finger occupies E729–H789. Residues C735, C738, C752, C755, C760, C763, C781, and C784 each contribute to the Zn(2+) site. The PH 2 domain maps to N820–R920. The disordered stretch occupies residues D922 to T960.

Interacts with DBNL/ABP1 and CTTN. Binds CDC42. May interact with CCPG1.

It is found in the cytoplasm. The protein resides in the cell projection. The protein localises to the lamellipodium. Its subcellular location is the ruffle. It localises to the cytoskeleton. In terms of biological role, activates CDC42, a member of the Ras-like family of Rho- and Rac proteins, by exchanging bound GDP for free GTP. Plays a role in regulating the actin cytoskeleton and cell shape. This is FYVE, RhoGEF and PH domain-containing protein 1 (Fgd1) from Mus musculus (Mouse).